The chain runs to 470 residues: 63 kDa sperm flagellar membrane protein (470 aa).

The first 25 residues, Met-1 to Ala-25, serve as a signal peptide directing secretion. An EGF-like 1 domain is found at Pro-41–Thr-80. Cystine bridges form between Cys-45–Cys-57, Cys-50–Cys-66, and Cys-68–Cys-79. N-linked (GlcNAc...) asparagine glycans are attached at residues Asn-78, Asn-170, and Asn-219. The SEA domain maps to Val-81–Glu-205. The region spanning Asp-202–Ile-250 is the EGF-like 2; calcium-binding domain. 6 disulfides stabilise this stretch: Cys-206/Cys-220, Cys-214/Cys-229, Cys-231/Cys-249, Cys-253/Cys-265, Cys-258/Cys-277, and Cys-279/Cys-291. The EGF-like 3 domain maps to Cys-249–Asp-292. Residue Asn-322 is glycosylated (N-linked (GlcNAc...) asparagine). Gly-446 carries GPI-anchor amidated glycine lipidation. The propeptide at Ser-447–His-470 is removed in mature form.

As to expression, sperm.

It localises to the cell projection. It is found in the cilium. Its subcellular location is the flagellum membrane. The protein is 63 kDa sperm flagellar membrane protein of Strongylocentrotus purpuratus (Purple sea urchin).